The primary structure comprises 612 residues: UvrABC system protein C (612 aa).

The GIY-YIG domain maps to 21-99; the sequence is HQPGVYRMYD…IKKYRPRYNV (79 aa). Positions 208–243 constitute a UVR domain; sequence QQVIDELMNKMEQASTDLDFERAARFRDQIAALRKT.

The protein belongs to the UvrC family. Interacts with UvrB in an incision complex.

It localises to the cytoplasm. Functionally, the UvrABC repair system catalyzes the recognition and processing of DNA lesions. UvrC both incises the 5' and 3' sides of the lesion. The N-terminal half is responsible for the 3' incision and the C-terminal half is responsible for the 5' incision. The chain is UvrABC system protein C from Idiomarina loihiensis (strain ATCC BAA-735 / DSM 15497 / L2-TR).